A 513-amino-acid chain; its full sequence is Probable metalloreductase AIM14 (513 aa).

The next 7 helical transmembrane spans lie at 22-42 (GYII…AHFL), 66-86 (PFWV…FTNV), 103-123 (LAFC…LLGQ), 138-158 (LIIL…TIHH), 166-186 (WANL…IVSS), 193-213 (FYSY…LLMI), and 219-239 (GVSD…ASRV). The Ferric oxidoreductase domain occupies 100–211 (LGRLAFCLVP…NFTVALFVLL (112 aa)). An FAD-binding FR-type domain is found at 240–368 (YNGYSVPGLT…GIPLYEYFDN (129 aa)).

The protein belongs to the ferric reductase (FRE) family. AIM14 subfamily.

It is found in the membrane. Probable cell surface metalloreductase. May be involved in iron or copper homeostasis. The polypeptide is Probable metalloreductase AIM14 (AIM14) (Clavispora lusitaniae (strain ATCC 42720) (Yeast)).